Consider the following 119-residue polypeptide: Large ribosomal subunit protein bL20 (119 aa).

Belongs to the bacterial ribosomal protein bL20 family.

Its function is as follows. Binds directly to 23S ribosomal RNA and is necessary for the in vitro assembly process of the 50S ribosomal subunit. It is not involved in the protein synthesizing functions of that subunit. The protein is Large ribosomal subunit protein bL20 of Xylella fastidiosa (strain 9a5c).